Consider the following 417-residue polypeptide: D-amino acid dehydrogenase (417 aa).

3–17 (VVILGSGVIGVTSAW) is a binding site for FAD.

This sequence belongs to the DadA oxidoreductase family. It depends on FAD as a cofactor.

It carries out the reaction a D-alpha-amino acid + A + H2O = a 2-oxocarboxylate + AH2 + NH4(+). It functions in the pathway amino-acid degradation; D-alanine degradation; NH(3) and pyruvate from D-alanine: step 1/1. Oxidative deamination of D-amino acids. This is D-amino acid dehydrogenase from Edwardsiella ictaluri (strain 93-146).